The chain runs to 179 residues: Protein GrpE (179 aa).

The segment covering 1–10 has biased composition (basic and acidic residues); the sequence is MSKKEEKQEE. The disordered stretch occupies residues 1 to 23; the sequence is MSKKEEKQEELQEEMEAVDAAGV.

Belongs to the GrpE family. As to quaternary structure, homodimer.

It is found in the cytoplasm. Functionally, participates actively in the response to hyperosmotic and heat shock by preventing the aggregation of stress-denatured proteins, in association with DnaK and GrpE. It is the nucleotide exchange factor for DnaK and may function as a thermosensor. Unfolded proteins bind initially to DnaJ; upon interaction with the DnaJ-bound protein, DnaK hydrolyzes its bound ATP, resulting in the formation of a stable complex. GrpE releases ADP from DnaK; ATP binding to DnaK triggers the release of the substrate protein, thus completing the reaction cycle. Several rounds of ATP-dependent interactions between DnaJ, DnaK and GrpE are required for fully efficient folding. This Enterococcus faecalis (strain ATCC 700802 / V583) protein is Protein GrpE.